Here is a 356-residue protein sequence, read N- to C-terminus: UDP-3-O-acylglucosamine N-acyltransferase (356 aa).

His242 (proton acceptor) is an active-site residue.

Belongs to the transferase hexapeptide repeat family. LpxD subfamily. In terms of assembly, homotrimer.

The enzyme catalyses a UDP-3-O-[(3R)-3-hydroxyacyl]-alpha-D-glucosamine + a (3R)-hydroxyacyl-[ACP] = a UDP-2-N,3-O-bis[(3R)-3-hydroxyacyl]-alpha-D-glucosamine + holo-[ACP] + H(+). Its pathway is bacterial outer membrane biogenesis; LPS lipid A biosynthesis. Functionally, catalyzes the N-acylation of UDP-3-O-acylglucosamine using 3-hydroxyacyl-ACP as the acyl donor. Is involved in the biosynthesis of lipid A, a phosphorylated glycolipid that anchors the lipopolysaccharide to the outer membrane of the cell. The chain is UDP-3-O-acylglucosamine N-acyltransferase from Acinetobacter baylyi (strain ATCC 33305 / BD413 / ADP1).